A 1300-amino-acid chain; its full sequence is MNVFDEILQPTVVNKCLHGNFTSAEREEYVVARTNVLSVFRVSRAQKLVLAYEWKLAGKIIDMQLLPQIGSPLKMLAILSSKSKVSLVRFDPVAESLETLSLHYYHDKFVNLSTSSLKTESIMAVDPLFRCLLVFNEDVLAILPLKLNTEDMEIDEDENGIKEPMAKRLKRNQGITSDSIIMPISSLHKSLKHVYDIKWLNNFSKPTVGILYQPVLAWCGNEKVLGNTMRYMVLSLDVEDEKTTVIAELADLPNDLHTLVPLKRGYVLIGVNELLYISASGALQSCIRLNTFATSSINTRITDNSDMNIFLSKSSIYFYKALKRHDLLILIDENCRMYNIITESEGNLLTKFDCVQVPIVNEIFKNSRLPLSVCGDLNLETGRVLIGFLSGDAMFLQLKNLKVAFAAKRQLVETVDDDDDEYSALYGESQNNTHTRIVETQEPFDISLLDSIFNIGPLTSLTIGKVASVEPTIQRLPNPNKDEFSIVATSGVGRGSHLTALHSTVQPHIEQALKFTSATRIWNLKIKGKDKYLVTTDADKEKSDVYQIDRNFEPFRAQDFRKDSRTIGMETMDDDKRILQVTSGGLYLFDVDFKRLARLTIDIEIVHACIIDPYILFTDARGNIKIYQLDSKNKKKFIKFKLPEALNEIIITSGSIFKSNICNKFLHGLENSSQEQLLFTFVTGDNQVIFFTEKHNDRIFQLNGVDQLEDMLFISTYQIPEEMNPDPSIKQIMLNRLGHHKKEEFLTILTFGGEIYQYKKSTKHSGKLLKCKSHPLITGAPNNAYPQGVNKIERVAHYFPNYNGYSVVFITGQVPYIIIKEDNSVCRIFRMTNIPIVTMARWGKNSVMCVDNIKNARVMKLDPECYYGNTQILRKIIIEDVVEEFETLGNIAYHERTGMYIISYTKFIEYQALSEDGEPLVGYDPSKPNSTGYKSGLLLINPLTWNIIDRLDLSENSMVNDIKTMLIQLNSKTRRKRELVIIGSSFVKEEDQPSTGCLLVLDITEVVAEPGKPDSNFKFKQLFEEEIRGSVNAVCEISGRFMIGQSSKALVRDMQEDNSAVPVAFLDMPVFITDAKSFSNLMIIGDSMQGFTFVGFDAEPYRMIVLGKSTSKFQVMNLEFLVNNGNINFIVTDRQNHLHVLRYAPDEANSLSGQRLVHCNSFNMFTTNNYMKLVRKHVEFGSKTSNYIALGCQTDGSIFRMIPLNEASYRRFYLVQQQLLDHEIPLAGFNTKMERLDNEYYHKGHSLRPTLDSQVLKKYIHLPITKRTTIENRVGRHASTELWHDLIDIEFSLRSLTNSN.

This sequence belongs to the CFT1 family.

The protein localises to the nucleus. Its function is as follows. RNA-binding component of the cleavage and polyadenylation factor (CPF) complex, which plays a key role in polyadenylation-dependent pre-mRNA 3'-end formation and cooperates with cleavage factors including the CFIA complex and NAB4/CFIB. Involved in poly(A) site recognition. May be involved in coupling transcription termination and mRNA 3'-end formation. In Kluyveromyces lactis (strain ATCC 8585 / CBS 2359 / DSM 70799 / NBRC 1267 / NRRL Y-1140 / WM37) (Yeast), this protein is Protein CFT1 (CFT1).